The sequence spans 304 residues: D-tagatose-1-phosphate kinase (304 aa).

Aspartate 250 (proton acceptor) is an active-site residue.

Belongs to the carbohydrate kinase PfkB family. Mg(2+) serves as cofactor.

It carries out the reaction alpha-D-tagatopyranose 1-phosphate + ATP = D-tagatofuranose 1,6-bisphosphate + ADP + H(+). The protein operates within carbohydrate degradation. Kinase involved in a D-tagatose catabolic pathway. Catalyzes the phosphorylation of D-tagatose-1-phosphate (Tag-1P) to D-tagatose-1,6-bisphosphate. The polypeptide is D-tagatose-1-phosphate kinase (Klebsiella oxytoca).